Here is a 363-residue protein sequence, read N- to C-terminus: uncharacterized protein (363 aa).

It belongs to the TelA family.

This is an uncharacterized protein from Bacillus subtilis (strain 168).